We begin with the raw amino-acid sequence, 488 residues long: Mannosylglycerate hydrolase MGH2 (488 aa).

Substrate-binding positions include Y94, 98 to 101 (WNWD), Y146, Q167, and G227. D229 serves as the catalytic Proton donor. Substrate is bound by residues R262 and 415–416 (YW). The active-site Proton acceptor is the E459.

It belongs to the glycosyl hydrolase 63 family.

The enzyme catalyses (2R)-2-O-(alpha-D-mannosyl)-glycerate + H2O = D-mannose + (R)-glycerate. The catalysed reaction is (2R)-2-O-(alpha-D-glucopyranosyl)-glycerate + H2O = (R)-glycerate + D-glucose. With respect to regulation, activity is not dependent on divalent cations, but it is enhanced by Mn(2+). Its function is as follows. Catalyzes the hydrolysis of alpha-D-mannosyl-glycerate (MG) to D-glycerate and D-mannose. Can also hydrolyze alpha-D-glucopyranosyl-glycerate (GG)with lower efficiency. The sequence is that of Mannosylglycerate hydrolase MGH2 from Selaginella moellendorffii (Spikemoss).